Here is a 580-residue protein sequence, read N- to C-terminus: Multidrug resistance-like ATP-binding protein MdlB (580 aa).

One can recognise an ABC transmembrane type-1 domain in the interval 25 to 310 (LILAFIFLLS…ITIQQSVLQQ (286 aa)). The next 6 helical transmembrane spans lie at 26–46 (ILAF…PILI), 61–81 (LLII…SVFL), 150–170 (IILI…MALV), 173–193 (FILP…TPLL), 247–267 (LDGF…LCNF), and 268–288 (MFLF…YAFI). In terms of domain architecture, ABC transporter spans 341-575 (INIQNVSFYH…KSCYYKMYKF (235 aa)). 375-382 (GHTGSGKS) is a binding site for ATP.

The protein belongs to the ABC transporter superfamily. Drug exporter-2 (TC 3.A.1.117) family.

It is found in the cell membrane. The catalysed reaction is ATP + H2O + xenobioticSide 1 = ADP + phosphate + xenobioticSide 2.. In Buchnera aphidicola subsp. Acyrthosiphon pisum (strain APS) (Acyrthosiphon pisum symbiotic bacterium), this protein is Multidrug resistance-like ATP-binding protein MdlB (mdlB).